The following is a 212-amino-acid chain: 3,4-dihydroxy-2-butanone 4-phosphate synthase (212 aa).

D-ribulose 5-phosphate contacts are provided by residues 37-38, D42, 150-154, and E174; these read RE and RRGHT. E38 contacts Mg(2+). H153 contributes to the Mg(2+) binding site.

Belongs to the DHBP synthase family. As to quaternary structure, homodimer. The cofactor is Mg(2+). Mn(2+) is required as a cofactor.

The enzyme catalyses D-ribulose 5-phosphate = (2S)-2-hydroxy-3-oxobutyl phosphate + formate + H(+). It functions in the pathway cofactor biosynthesis; riboflavin biosynthesis; 2-hydroxy-3-oxobutyl phosphate from D-ribulose 5-phosphate: step 1/1. Its function is as follows. Catalyzes the conversion of D-ribulose 5-phosphate to formate and 3,4-dihydroxy-2-butanone 4-phosphate. The protein is 3,4-dihydroxy-2-butanone 4-phosphate synthase of Shewanella pealeana (strain ATCC 700345 / ANG-SQ1).